We begin with the raw amino-acid sequence, 508 residues long: Light-independent protochlorophyllide reductase subunit B (508 aa).

Aspartate 36 contributes to the [4Fe-4S] cluster binding site. Catalysis depends on aspartate 294, which acts as the Proton donor. 429 to 430 contributes to the substrate binding site; the sequence is GM.

Belongs to the ChlB/BchB/BchZ family. Protochlorophyllide reductase is composed of three subunits; ChlL, ChlN and ChlB. Forms a heterotetramer of two ChlB and two ChlN subunits. It depends on [4Fe-4S] cluster as a cofactor.

It carries out the reaction chlorophyllide a + oxidized 2[4Fe-4S]-[ferredoxin] + 2 ADP + 2 phosphate = protochlorophyllide a + reduced 2[4Fe-4S]-[ferredoxin] + 2 ATP + 2 H2O. The protein operates within porphyrin-containing compound metabolism; chlorophyll biosynthesis (light-independent). In terms of biological role, component of the dark-operative protochlorophyllide reductase (DPOR) that uses Mg-ATP and reduced ferredoxin to reduce ring D of protochlorophyllide (Pchlide) to form chlorophyllide a (Chlide). This reaction is light-independent. The NB-protein (ChlN-ChlB) is the catalytic component of the complex. This is Light-independent protochlorophyllide reductase subunit B from Picosynechococcus sp. (strain ATCC 27264 / PCC 7002 / PR-6) (Agmenellum quadruplicatum).